The primary structure comprises 447 residues: Na(+)-translocating NADH-quinone reductase subunit A (447 aa).

This sequence belongs to the NqrA family. In terms of assembly, composed of six subunits; NqrA, NqrB, NqrC, NqrD, NqrE and NqrF.

The catalysed reaction is a ubiquinone + n Na(+)(in) + NADH + H(+) = a ubiquinol + n Na(+)(out) + NAD(+). Functionally, NQR complex catalyzes the reduction of ubiquinone-1 to ubiquinol by two successive reactions, coupled with the transport of Na(+) ions from the cytoplasm to the periplasm. NqrA to NqrE are probably involved in the second step, the conversion of ubisemiquinone to ubiquinol. This is Na(+)-translocating NADH-quinone reductase subunit A from Haemophilus influenzae (strain PittEE).